A 412-amino-acid chain; its full sequence is Alpha-1-antiproteinase (412 aa).

An N-terminal signal peptide occupies residues 1–24 (MPSSISWGLLLLAGLCCLAPGSLA). Serine 33 bears the Phosphoserine mark. Residues asparagine 65, asparagine 102, asparagine 165, and asparagine 266 are each glycosylated (N-linked (GlcNAc...) asparagine). Positions 368–387 (GVTVLEAIPMSLPPDVRFDR) are RCL. Serine 378 is subject to Phosphoserine.

The protein belongs to the serpin family. As to quaternary structure, interacts with CELA2A. Interacts with ERGIC3 and LMAN1/ERGIC53. Interacts with PRSS1/Trypsin. As to expression, plasma.

The protein resides in the secreted. Its function is as follows. Inhibitor of serine proteases. The protein is Alpha-1-antiproteinase of Callosciurus caniceps (Gray-bellied squirrel).